The chain runs to 190 residues: Imidazole glycerol phosphate synthase subunit HisH (190 aa).

Positions 2–190 (IVGVVDYTVG…IKRFLAVAKR (189 aa)) constitute a Glutamine amidotransferase type-1 domain. Catalysis depends on C73, which acts as the Nucleophile. Catalysis depends on residues H169 and E171.

As to quaternary structure, heterodimer of HisH and HisF.

The protein localises to the cytoplasm. The enzyme catalyses 5-[(5-phospho-1-deoxy-D-ribulos-1-ylimino)methylamino]-1-(5-phospho-beta-D-ribosyl)imidazole-4-carboxamide + L-glutamine = D-erythro-1-(imidazol-4-yl)glycerol 3-phosphate + 5-amino-1-(5-phospho-beta-D-ribosyl)imidazole-4-carboxamide + L-glutamate + H(+). It carries out the reaction L-glutamine + H2O = L-glutamate + NH4(+). Its pathway is amino-acid biosynthesis; L-histidine biosynthesis; L-histidine from 5-phospho-alpha-D-ribose 1-diphosphate: step 5/9. Its function is as follows. IGPS catalyzes the conversion of PRFAR and glutamine to IGP, AICAR and glutamate. The HisH subunit catalyzes the hydrolysis of glutamine to glutamate and ammonia as part of the synthesis of IGP and AICAR. The resulting ammonia molecule is channeled to the active site of HisF. In Pyrobaculum aerophilum (strain ATCC 51768 / DSM 7523 / JCM 9630 / CIP 104966 / NBRC 100827 / IM2), this protein is Imidazole glycerol phosphate synthase subunit HisH.